The primary structure comprises 584 residues: High-affinity choline transporter 1 (584 aa).

The Extracellular portion of the chain corresponds to 1-6 (MTVHID). Residues 7–27 (GIVAIVLFYLLILFVGLWAAW) traverse the membrane as a helical segment. Residues 28 to 50 (KSKNTSMEGAMDRSEAIMIGGRD) are Cytoplasmic-facing. A helical transmembrane segment spans residues 51–71 (IGLLVGGFTMTATWVGGGYIN). Topologically, residues 72–83 (GTAEAVYVPGYG) are extracellular. Residues 84-104 (LAWAQAPFGYALSLVIGGLFF) form a helical membrane-spanning segment. At 105 to 127 (AKPMRSRGYVTMLDPFQQMYGKR) the chain is on the cytoplasmic side. Residues 128–148 (MGGLLFIPALLGEIFWSAAIL) form a helical membrane-spanning segment. At 149 to 166 (SALGATLSVIVDININVS) the chain is on the extracellular side. Residues 167–187 (VVVSAVIAVLYTLVGGLYSVA) traverse the membrane as a helical segment. The Cytoplasmic portion of the chain corresponds to 188-193 (YTDVVQ). The helical transmembrane segment at 194 to 214 (LFCIFLGLWISIPFALLNPAV) threads the bilayer. The Extracellular portion of the chain corresponds to 215–239 (TDIIVTANQEVYQEPWVGNIQSKDS). The chain crosses the membrane as a helical span at residues 240–260 (LIWIDNFLLLMLGGIPWQVYF). The Cytoplasmic portion of the chain corresponds to 261-276 (QRVLSASSATYAQVLS). The chain crosses the membrane as a helical span at residues 277–297 (FLAAFGCVLMAIPSVLIGAIG). At 298 to 319 (TSTDWNQTSYGLPGPIGKNETD) the chain is on the extracellular side. N-linked (GlcNAc...) asparagine glycosylation occurs at Asn303. A helical membrane pass occupies residues 320 to 340 (MILPIVLQHLCPPYISFFGLG). At 341 to 378 (AVSAAVMSSADSSILSASSMFARNIYHLAFRQEASDKE) the chain is on the cytoplasmic side. Residues 379–399 (IVWVMRITIFLFGGAATSMAL) traverse the membrane as a helical segment. The Extracellular portion of the chain corresponds to 400–408 (LAQSIYGLW). A helical membrane pass occupies residues 409–429 (YLSSDLVYVIIFPQLISVLFV). Residues 430-437 (KGTNTYGS) lie on the Cytoplasmic side of the membrane. A helical transmembrane segment spans residues 438-458 (IAGYIIGFLLRISGGEPYLHM). At 459-487 (QPFIYYPGCYLDHSFGDDPVYVQRFPFKT) the chain is on the extracellular side. Residues 488 to 508 (MAMLFSFLGNTGVSYLVKYLF) traverse the membrane as a helical segment. At 509 to 584 (VSGILPPKLD…NPELSKSGND (76 aa)) the chain is on the cytoplasmic side.

It belongs to the sodium:solute symporter (SSF) (TC 2.A.21) family. In terms of processing, phosphorylated. As to expression, specific for cholinergic neurons.

The protein resides in the membrane. Its function is as follows. Imports choline from the extracellular space to the neuron with high affinity. Rate-limiting step in acetylcholine synthesis. Sodium ion and chloride ion dependent. In Torpedo marmorata (Marbled electric ray), this protein is High-affinity choline transporter 1 (CHT1).